Consider the following 283-residue polypeptide: tRNA-cytidine(32) 2-sulfurtransferase (283 aa).

Residues 37 to 42 (SGGKDS) carry the PP-loop motif motif. [4Fe-4S] cluster contacts are provided by Cys112, Cys115, and Cys203.

Belongs to the TtcA family. In terms of assembly, homodimer. Mg(2+) serves as cofactor. [4Fe-4S] cluster is required as a cofactor.

It localises to the cytoplasm. It carries out the reaction cytidine(32) in tRNA + S-sulfanyl-L-cysteinyl-[cysteine desulfurase] + AH2 + ATP = 2-thiocytidine(32) in tRNA + L-cysteinyl-[cysteine desulfurase] + A + AMP + diphosphate + H(+). It participates in tRNA modification. Functionally, catalyzes the ATP-dependent 2-thiolation of cytidine in position 32 of tRNA, to form 2-thiocytidine (s(2)C32). The sulfur atoms are provided by the cysteine/cysteine desulfurase (IscS) system. The chain is tRNA-cytidine(32) 2-sulfurtransferase from Legionella pneumophila (strain Corby).